The chain runs to 89 residues: Small ribosomal subunit protein uS14 (89 aa).

Belongs to the universal ribosomal protein uS14 family. Part of the 30S ribosomal subunit. Contacts proteins S3 and S10.

Binds 16S rRNA, required for the assembly of 30S particles and may also be responsible for determining the conformation of the 16S rRNA at the A site. The polypeptide is Small ribosomal subunit protein uS14 (Chlorobium luteolum (strain DSM 273 / BCRC 81028 / 2530) (Pelodictyon luteolum)).